The primary structure comprises 134 residues: Bradykinin-related peptides (134 aa).

A signal peptide spans 1–22 (MAFLKKSLFLVLFLGVVSLSFC). 3 consecutive propeptides follow at residues 23-44 (EEEKREEHEEEKRDEEDAESLG), 71-82 (RSISGLTPIRLS), and 99-121 (ISEADPGFTPSFVVIKGLSPLRG). Over residues 24-33 (EEKREEHEEE) the composition is skewed to basic and acidic residues. Residues 24–71 (EEKREEHEEEKRDEEDAESLGKRYGGLSPLRISKRVPPGFTPFRSPAR) form a disordered region. Pro126 is modified (4-hydroxyproline; partial; in form [Hyp3]-bradykinin and [Hyp3]-bradykinin-Val,Asp).

This sequence belongs to the frog skin active peptide (FSAP) family. Bradykinin-related peptide subfamily. In terms of tissue distribution, expressed by the skin glands. Expression levels in inguinal glands are much higher than in granular glands.

It localises to the secreted. May produce in vitro relaxation of rat arterial smooth muscle and constriction of intestinal smooth muscle. May target bradykinin receptors (BDKRB). The polypeptide is Bradykinin-related peptides (Physalaemus nattereri (Cuyaba dwarf frog)).